Consider the following 145-residue polypeptide: MHPRPEHLSPTLNHNHRLKLKQPATTSRMLARTILATLVSAACFATVNAQTCSATNAVCCQQLQDPDNLNADALNLLRLLNINPNTLTGAVGLTCKRLTEACFACLLLTRPGTSLVSGSCNANAACCTGNNYNGLIVLGCTQIQV.

Disulfide bonds link C43/C126, C59/C120, C60/C95, and C127/C140.

It belongs to the fungal hydrophobin family. Self-assembles to form functional amyloid fibrils called rodlets. Self-assembly into fibrillar rodlets occurs spontaneously at hydrophobic:hydrophilic interfaces and the rodlets further associate laterally to form amphipathic monolayers.

Its function is as follows. Aerial growth, conidiation, and dispersal of filamentous fungi in the environment rely upon a capability of their secreting small amphipathic proteins called hydrophobins (HPBs) with low sequence identity. Class I can self-assemble into an outermost layer of rodlet bundles on aerial cell surfaces, conferring cellular hydrophobicity that supports fungal growth, development and dispersal; whereas Class II form highly ordered films at water-air interfaces through intermolecular interactions but contribute nothing to the rodlet structure. RodE is a class I hydrophobin that, unlike rodA, is not required for rodlet formation. The protein is Class I hydrophobin rodE of Aspergillus fumigatus (strain ATCC MYA-4609 / CBS 101355 / FGSC A1100 / Af293) (Neosartorya fumigata).